A 90-amino-acid polypeptide reads, in one-letter code: Small ribosomal subunit protein bS20 (90 aa).

It belongs to the bacterial ribosomal protein bS20 family.

Binds directly to 16S ribosomal RNA. The protein is Small ribosomal subunit protein bS20 of Roseiflexus sp. (strain RS-1).